Reading from the N-terminus, the 275-residue chain is Large ribosomal subunit protein uL2cz (275 aa).

2 disordered regions span residues 1-20 and 225-275; these read MAIHLYKTSTPSTRNGAVDS and NPVD…RRSK.

Belongs to the universal ribosomal protein uL2 family. As to quaternary structure, part of the 50S ribosomal subunit.

It is found in the plastid. The protein resides in the chloroplast. The polypeptide is Large ribosomal subunit protein uL2cz (rpl2-A) (Populus alba (White poplar)).